The chain runs to 496 residues: Glycogen synthase (496 aa).

Lys-15 contributes to the ADP-alpha-D-glucose binding site.

The protein belongs to the glycosyltransferase 1 family. Bacterial/plant glycogen synthase subfamily.

It catalyses the reaction [(1-&gt;4)-alpha-D-glucosyl](n) + ADP-alpha-D-glucose = [(1-&gt;4)-alpha-D-glucosyl](n+1) + ADP + H(+). The protein operates within glycan biosynthesis; glycogen biosynthesis. In terms of biological role, synthesizes alpha-1,4-glucan chains using ADP-glucose. The sequence is that of Glycogen synthase from Natranaerobius thermophilus (strain ATCC BAA-1301 / DSM 18059 / JW/NM-WN-LF).